We begin with the raw amino-acid sequence, 1218 residues long: Thrombospondin type 1 domain-containing protein (1218 aa).

4 disordered regions span residues 82–101, 189–240, 298–383, and 445–471; these read SAGF…PCSS, SLEE…SRTR, HTAN…VNGL, and GGKS…SHRG. A compositionally biased stretch (basic and acidic residues) spans 201–210; the sequence is GYEEERERRS. Positions 315–375 are enriched in low complexity; that stretch reads SSRFTSKASS…SSPLSSSPDS (61 aa). The TSP type-1 domain occupies 638–704; sequence SCITGPWSEW…RRKCNLGACP (67 aa). A helical membrane pass occupies residues 886–906; it reads GVSHLWISLCAGAVAAVVFLV. Positions 1129–1153 are disordered; that stretch reads RRRARRGRREGDSGEGGDCGEARKA.

In terms of assembly, component of a complex, at least composed of cysteine repeat modular protein A (CRMPa), cysteine repeat modular protein B (CRMPb), micronemal protein 15 (MIC15) and thrombospondin type 1 domain-containing protein (TSP1).

It is found in the membrane. Its function is as follows. Required for rhoptry secretion. Plays a role in host cell invasion. The polypeptide is Thrombospondin type 1 domain-containing protein (Toxoplasma gondii).